Reading from the N-terminus, the 204-residue chain is Peptidyl-tRNA hydrolase (204 aa).

Position 14 (tyrosine 14) interacts with tRNA. Histidine 19 serves as the catalytic Proton acceptor. Phenylalanine 64, asparagine 66, and asparagine 112 together coordinate tRNA.

This sequence belongs to the PTH family. In terms of assembly, monomer.

The protein localises to the cytoplasm. The enzyme catalyses an N-acyl-L-alpha-aminoacyl-tRNA + H2O = an N-acyl-L-amino acid + a tRNA + H(+). Functionally, hydrolyzes ribosome-free peptidyl-tRNAs (with 1 or more amino acids incorporated), which drop off the ribosome during protein synthesis, or as a result of ribosome stalling. In terms of biological role, catalyzes the release of premature peptidyl moieties from peptidyl-tRNA molecules trapped in stalled 50S ribosomal subunits, and thus maintains levels of free tRNAs and 50S ribosomes. The sequence is that of Peptidyl-tRNA hydrolase from Azorhizobium caulinodans (strain ATCC 43989 / DSM 5975 / JCM 20966 / LMG 6465 / NBRC 14845 / NCIMB 13405 / ORS 571).